Consider the following 1175-residue polypeptide: Major DNA-binding protein (1175 aa).

A zinc finger lies at 496-509 (CSLCDRASRPACAH). Residues 825-826 (FW) carry the Required for filament formation motif. The required for nuclear localization stretch occupies residues 1151–1175 (KRPPPEDDLFDMGAPPEKRLTFDML).

Belongs to the herpesviridae major DNA-binding protein family. Homooligomers. Forms double-helical filaments necessary for the formation of replication compartments within the host nucleus. Interacts with the origin-binding protein. Interacts with the helicase primase complex; this interaction stimulates primer synthesis activity of the helicase-primase complex. Interacts with the DNA polymerase. Interacts with the alkaline exonuclease; this interaction increases its nuclease processivity.

The protein resides in the host nucleus. Plays several crucial roles in viral infection. Participates in the opening of the viral DNA origin to initiate replication by interacting with the origin-binding protein. May disrupt loops, hairpins and other secondary structures present on ssDNA to reduce and eliminate pausing of viral DNA polymerase at specific sites during elongation. Promotes viral DNA recombination by performing strand-transfer, characterized by the ability to transfer a DNA strand from a linear duplex to a complementary single-stranded DNA circle. Can also catalyze the renaturation of complementary single strands. Additionally, reorganizes the host cell nucleus, leading to the formation of prereplicative sites and replication compartments. This process is driven by the protein which can form double-helical filaments in the absence of DNA. The polypeptide is Major DNA-binding protein (Suid herpesvirus 1 (SuHV-1)).